The following is a 385-amino-acid chain: uncharacterized protein (385 aa).

Belongs to the phage portal family. HK97 subfamily.

This is an uncharacterized protein from Rickettsia felis (strain ATCC VR-1525 / URRWXCal2) (Rickettsia azadi).